Reading from the N-terminus, the 158-residue chain is Transcription elongation factor GreA (158 aa).

Positions 53-73 form a coiled coil; it reads EQQGMVEARIRDIEAKLSNAQ.

The protein belongs to the GreA/GreB family.

Functionally, necessary for efficient RNA polymerase transcription elongation past template-encoded arresting sites. The arresting sites in DNA have the property of trapping a certain fraction of elongating RNA polymerases that pass through, resulting in locked ternary complexes. Cleavage of the nascent transcript by cleavage factors such as GreA or GreB allows the resumption of elongation from the new 3'terminus. GreA releases sequences of 2 to 3 nucleotides. The polypeptide is Transcription elongation factor GreA (Pseudomonas aeruginosa (strain ATCC 15692 / DSM 22644 / CIP 104116 / JCM 14847 / LMG 12228 / 1C / PRS 101 / PAO1)).